Here is a 109-residue protein sequence, read N- to C-terminus: Parvalbumin-7 (109 aa).

A2 is modified (N-acetylalanine). EF-hand domains lie at 39–74 (LSAD…FSAD) and 78–109 (LTDK…LVHE). Ca(2+) is bound by residues D52, D54, S56, F58, E60, E63, D91, D93, D95, K97, and E102.

It belongs to the parvalbumin family.

In terms of biological role, in muscle, parvalbumin is thought to be involved in relaxation after contraction. It binds two calcium ions. This chain is Parvalbumin-7 (pvalb7), found in Danio rerio (Zebrafish).